Consider the following 107-residue polypeptide: UPF0145 protein YbjQ (107 aa).

The protein belongs to the UPF0145 family.

This is UPF0145 protein YbjQ from Salmonella dublin (strain CT_02021853).